We begin with the raw amino-acid sequence, 154 residues long: uncharacterized protein (154 aa).

It belongs to the MG032/MG096/MG288 family.

This is an uncharacterized protein from Mycoplasma pneumoniae (strain ATCC 29342 / M129 / Subtype 1) (Mycoplasmoides pneumoniae).